The primary structure comprises 103 residues: Large ribosomal subunit protein bL21 (103 aa).

This sequence belongs to the bacterial ribosomal protein bL21 family. In terms of assembly, part of the 50S ribosomal subunit. Contacts protein L20.

Functionally, this protein binds to 23S rRNA in the presence of protein L20. The polypeptide is Large ribosomal subunit protein bL21 (Salmonella schwarzengrund (strain CVM19633)).